A 427-amino-acid polypeptide reads, in one-letter code: Mitogen-activated protein kinase 8 (427 aa).

Positions 26-321 (YQNLKPIGSG…VDEALQHPYI (296 aa)) constitute a Protein kinase domain. Residues 32–40 (IGSGAQGIV) and Lys55 contribute to the ATP site. Cys116 is subject to S-nitrosocysteine. Asp151 functions as the Proton acceptor in the catalytic mechanism. A Phosphothreonine; by MAP2K7 modification is found at Thr183. The TXY motif lies at 183–185 (TPY). Tyr185 carries the post-translational modification Phosphotyrosine; by MAP2K4. A phosphoserine mark is found at Met301 and Ser377. The interval 371–427 (VIRGQPSPLGAAVINGSQHPSSSSSVNDVSSMSTDPTLASDTDSSLEAAAGPLGCCR) is disordered. Low complexity predominate over residues 387-403 (SQHPSSSSSVNDVSSMS). Residues 404 to 415 (TDPTLASDTDSS) show a composition bias toward polar residues.

This sequence belongs to the protein kinase superfamily. CMGC Ser/Thr protein kinase family. MAP kinase subfamily. Forms a complex with MAPK8IP1 and ARHGEF28. Found in a complex with SH3RF1, RAC1, MAP3K11/MLK3, MAP2K7/MKK7 and MAPK8IP1/JIP1. Found in a complex with SH3RF1, RAC2, MAP3K7/TAK1, MAP2K7/MKK7, MAPK8IP1/JIP1 and MAPK9/JNK2. Binds to at least four scaffolding proteins, MAPK8IP1/JIP-1, MAPK8IP2/JIP-2, MAPK8IP3/JIP-3/JSAP1 and SPAG9/MAPK8IP4/JIP-4. These proteins also bind other components of the JNK signaling pathway. Interacts with TP53 and WWOX. Interacts with JAMP. Interacts with HSF1 (via D domain and preferentially with hyperphosphorylated form); this interaction occurs under both normal growth conditions and immediately upon heat shock. Interacts (phosphorylated form) with NFE2; the interaction phosphorylates NFE2 in undifferentiated cells. Interacts with NFATC4. Interacts with MECOM; regulates JNK signaling. Interacts with PIN1; this interaction mediates MAPK8 conformational changes leading to the binding of MAPK8 to its substrates. Interacts with GRIPAP1. Interacts with POU5F1; phosphorylates POU5F1 at 'Ser-355'. Interacts with STMN2, STMN3 and STMN4. Interacts with HSF4. The cofactor is Mg(2+). In terms of processing, dually phosphorylated on Thr-183 and Tyr-185 by MAP2K7 and MAP2K4, which activates the enzyme. Phosphorylated by TAOK2. May be phosphorylated at Thr-183 and Tyr-185 by MAP3K1/MEKK1. Phosphorylated form is more concentrated at synapses than none-phosphorylated.

It localises to the cytoplasm. The protein resides in the nucleus. It is found in the synapse. It carries out the reaction L-seryl-[protein] + ATP = O-phospho-L-seryl-[protein] + ADP + H(+). It catalyses the reaction L-threonyl-[protein] + ATP = O-phospho-L-threonyl-[protein] + ADP + H(+). Activated by threonine and tyrosine phosphorylation by either of two dual specificity kinases, MAP2K4 and MAP2K7. MAP2K4 shows a strong preference for Tyr-185 while MAP2K7 phosphorylates Tyr-183 preferentially. Inhibited by dual specificity phosphatases, such as DUSP1. Inhibited by SERPINB3. In terms of biological role, serine/threonine-protein kinase involved in various processes such as cell proliferation, differentiation, migration, transformation and programmed cell death. Extracellular stimuli such as pro-inflammatory cytokines or physical stress stimulate the stress-activated protein kinase/c-Jun N-terminal kinase (SAP/JNK) signaling pathway. In this cascade, two dual specificity kinases MAP2K4/MKK4 and MAP2K7/MKK7 phosphorylate and activate MAPK8/JNK1. In turn, MAPK8/JNK1 phosphorylates a number of transcription factors, primarily components of AP-1 such as JUN, JDP2 and ATF2 and thus regulates AP-1 transcriptional activity. Phosphorylates the replication licensing factor CDT1, inhibiting the interaction between CDT1 and the histone H4 acetylase HBO1 to replication origins. Loss of this interaction abrogates the acetylation required for replication initiation. Promotes stressed cell apoptosis by phosphorylating key regulatory factors including p53/TP53 and Yes-associates protein YAP1. In T-cells, MAPK8 and MAPK9 are required for polarized differentiation of T-helper cells into Th1 cells. Contributes to the survival of erythroid cells by phosphorylating the antagonist of cell death BAD upon EPO stimulation. Mediates starvation-induced BCL2 phosphorylation, BCL2 dissociation from BECN1, and thus activation of autophagy. Phosphorylates STMN2 and hence regulates microtubule dynamics, controlling neurite elongation in cortical neurons. In the developing brain, through its cytoplasmic activity on STMN2, negatively regulates the rate of exit from multipolar stage and of radial migration from the ventricular zone. Phosphorylates several other substrates including heat shock factor protein 4 (HSF4), the deacetylase SIRT1, ELK1, or the E3 ligase ITCH. Phosphorylates the CLOCK-BMAL1 heterodimer and plays a role in the regulation of the circadian clock. Phosphorylates the heat shock transcription factor HSF1, suppressing HSF1-induced transcriptional activity. Phosphorylates POU5F1, which results in the inhibition of POU5F1's transcriptional activity and enhances its proteasomal degradation. Phosphorylates JUND and this phosphorylation is inhibited in the presence of MEN1. In neurons, phosphorylates SYT4 which captures neuronal dense core vesicles at synapses. Phosphorylates EIF4ENIF1/4-ET in response to oxidative stress, promoting P-body assembly. Phosphorylates SIRT6 in response to oxidative stress, stimulating its mono-ADP-ribosyltransferase activity. Phosphorylates NLRP3, promoting assembly of the NLRP3 inflammasome. Phosphorylates ALKBH5 in response to reactive oxygen species (ROS), promoting ALKBH5 sumoylation and inactivation. Functionally, JNK1 isoforms display different binding patterns: beta-1 preferentially binds to c-Jun, whereas alpha-1, alpha-2, and beta-2 have a similar low level of binding to both c-Jun or ATF2. However, there is no correlation between binding and phosphorylation, which is achieved at about the same efficiency by all isoforms. The chain is Mitogen-activated protein kinase 8 (MAPK8) from Homo sapiens (Human).